A 215-amino-acid chain; its full sequence is Cytochrome b6 (215 aa).

The chain crosses the membrane as a helical span at residues 32-52 (IFYCLGGITLTCFLVQVATGF). Residue Cys35 coordinates heme c. Residues His86 and His100 each contribute to the heme b site. The next 3 helical transmembrane spans lie at 90 to 110 (ASMM…TGGF), 116 to 136 (LTWV…VTGY), and 186 to 206 (LHTF…FPMI). Heme b-binding residues include His187 and His202.

Belongs to the cytochrome b family. PetB subfamily. The 4 large subunits of the cytochrome b6-f complex are cytochrome b6, subunit IV (17 kDa polypeptide, PetD), cytochrome f and the Rieske protein, while the 4 small subunits are PetG, PetL, PetM and PetN. The complex functions as a dimer. The cofactor is heme b. Requires heme c as cofactor.

The protein localises to the plastid. It is found in the chloroplast thylakoid membrane. Component of the cytochrome b6-f complex, which mediates electron transfer between photosystem II (PSII) and photosystem I (PSI), cyclic electron flow around PSI, and state transitions. This is Cytochrome b6 from Lactuca sativa (Garden lettuce).